A 134-amino-acid chain; its full sequence is Small ribosomal subunit protein bS6 (134 aa).

Residues 100 to 134 (SFLARDETDRRERSEETAEGEGEPDHSANEAVVTA) form a disordered region. A compositionally biased stretch (basic and acidic residues) spans 103–115 (ARDETDRRERSEE).

This sequence belongs to the bacterial ribosomal protein bS6 family.

In terms of biological role, binds together with bS18 to 16S ribosomal RNA. The polypeptide is Small ribosomal subunit protein bS6 (Acidithiobacillus ferrooxidans (strain ATCC 23270 / DSM 14882 / CIP 104768 / NCIMB 8455) (Ferrobacillus ferrooxidans (strain ATCC 23270))).